A 448-amino-acid polypeptide reads, in one-letter code: Guanine deaminase (448 aa).

Zn(2+) is bound by residues His74 and His76. Substrate is bound by residues 76 to 79 (HAPQ), 204 to 205 (RF), 231 to 234 (HISE), and Asp319. His231 and Asp319 together coordinate Zn(2+).

This sequence belongs to the metallo-dependent hydrolases superfamily. ATZ/TRZ family. The cofactor is Zn(2+).

The catalysed reaction is guanine + H2O + H(+) = xanthine + NH4(+). It functions in the pathway purine metabolism; guanine degradation; xanthine from guanine: step 1/1. Its activity is regulated as follows. Strongly inhibited by p-chloromercuribenzoate (PCMB). Potassium cyanide (KCN) strongly inhibits activity towards 7,8-dihydropterin but has almost no effect on activity towards guanine. Pterin inhibits activity towards guanine but has little effect on activity towards 7,8-dihydropterin. In terms of biological role, catalyzes the hydrolytic deamination of guanine, producing xanthine and ammonia. Also has 7,8-dihydropterin deaminase activity, which plays a role in synthesis of the red eye pigment aurodrosopterin. This chain is Guanine deaminase, found in Drosophila melanogaster (Fruit fly).